Reading from the N-terminus, the 1097-residue chain is RecBCD enzyme subunit RecC (1097 aa).

This sequence belongs to the RecC family. As to quaternary structure, heterotrimer of RecB, RecC and RecD. All subunits contribute to DNA-binding.

In terms of biological role, a helicase/nuclease that prepares dsDNA breaks (DSB) for recombinational DNA repair. Binds to DSBs and unwinds DNA via a highly rapid and processive ATP-dependent bidirectional helicase activity. Holoenzyme degrades any linearized DNA that is unable to undergo homologous recombination. In the holoenzyme this subunit recognizes the wild-type Chi sequence, and when added to isolated RecB increases its ATP-dependent helicase processivity. Unlike the case in E.coli, suppresses RecA-dependent homologous recombination, is instead required for single-strand annealing pathway repair of DSB. The polypeptide is RecBCD enzyme subunit RecC (Mycobacterium tuberculosis (strain ATCC 25618 / H37Rv)).